A 261-amino-acid polypeptide reads, in one-letter code: MSLTELTGNPRHDQLLMLIAERGYMNIDELANLLDVSTQTVRRDIRKLSEQGLITRHHGGAGRASSVVNTAFEQREVSQTEEKKAIAEAVADYIPDGSTIFITIGTTVEHVARALLNHNHLRIITNSLRVAHILYHNPRFEVMVPGGTLRSHNSGIIGPSAASFVADFRADYLVTSVGAIESDGALMEFDVNEANVVKTMMAHARNILLVADHTKYHASAAVEIGNVAQVTALFTDELPPAALKSRLQDSQIEIILPQEDA.

An HTH deoR-type domain is found at 8 to 63; that stretch reads GNPRHDQLLMLIAERGYMNIDELANLLDVSTQTVRRDIRKLSEQGLITRHHGGAGR. A DNA-binding region (H-T-H motif) is located at residues 25-44; the sequence is MNIDELANLLDVSTQTVRRD.

As to quaternary structure, monomer in the absence of DNA. Exhibits a high level of cooperativity once it is bound to its target DNA.

Its activity is regulated as follows. Inactivated in the presence of the effectors sulfoquinovose and sulfoquinovosyl glycerol, leading to the de-repression of the target genes. Functionally, involved in the regulation of the sulfoquinovose operon. Represses the expression of the yihUTS operon and of the yihV and csqR genes. Binds DNA inside the spacer between the bidirectional transcription units comprising the yihUTS operon and the yihV gene, and upstream the csqR gene itself. In Escherichia coli (strain K12), this protein is HTH-type transcriptional repressor CsqR.